A 218-amino-acid polypeptide reads, in one-letter code: Glutathione S-transferase Mu 2 (218 aa).

Residues 2 to 88 (PIILGYWNIR…YIARKHNLCG (87 aa)) form the GST N-terminal domain. 7-8 (YW) contributes to the glutathione binding site. Phosphoserine is present on residues S27 and S44. Glutathione contacts are provided by residues 43–46 (RSQW), K50, 59–60 (NL), and 72–73 (QS). Positions 90 to 208 (TEKEKIQEDI…KSSRFLPRPV (119 aa)) constitute a GST C-terminal domain. Residue Y116 coordinates substrate.

It belongs to the GST superfamily. Mu family. As to quaternary structure, homodimer.

The protein localises to the cytoplasm. It catalyses the reaction RX + glutathione = an S-substituted glutathione + a halide anion + H(+). The catalysed reaction is 11(S)-hydroxy-14(S),15(S)-epoxy-(5Z,8Z,12E)-eicosatrienoate + glutathione = (11S,15S)-dihydroxy-14(R)-S-glutathionyl-(5Z,8Z,12E)-eicosatrienoate. In terms of biological role, conjugation of reduced glutathione to a wide number of exogenous and endogenous hydrophobic electrophiles. Participates in the formation of novel hepoxilin regioisomers. The chain is Glutathione S-transferase Mu 2 (GSTM2) from Pongo abelii (Sumatran orangutan).